A 124-amino-acid chain; its full sequence is Small ribosomal subunit protein uS12 (124 aa).

3-methylthioaspartic acid is present on Asp-89. Residues 104–124 (ATGVKDRKQGRSKYGAKRPKE) form a disordered region. Residues 113-124 (GRSKYGAKRPKE) show a composition bias toward basic residues.

Belongs to the universal ribosomal protein uS12 family. In terms of assembly, part of the 30S ribosomal subunit. Contacts proteins S8 and S17. May interact with IF1 in the 30S initiation complex.

In terms of biological role, with S4 and S5 plays an important role in translational accuracy. Its function is as follows. Interacts with and stabilizes bases of the 16S rRNA that are involved in tRNA selection in the A site and with the mRNA backbone. Located at the interface of the 30S and 50S subunits, it traverses the body of the 30S subunit contacting proteins on the other side and probably holding the rRNA structure together. The combined cluster of proteins S8, S12 and S17 appears to hold together the shoulder and platform of the 30S subunit. In Picosynechococcus sp. (strain ATCC 27264 / PCC 7002 / PR-6) (Agmenellum quadruplicatum), this protein is Small ribosomal subunit protein uS12.